The sequence spans 396 residues: Tryptophan synthase beta chain (396 aa).

Position 86 is an N6-(pyridoxal phosphate)lysine (Lys86).

Belongs to the TrpB family. As to quaternary structure, tetramer of two alpha and two beta chains. The cofactor is pyridoxal 5'-phosphate.

It carries out the reaction (1S,2R)-1-C-(indol-3-yl)glycerol 3-phosphate + L-serine = D-glyceraldehyde 3-phosphate + L-tryptophan + H2O. The protein operates within amino-acid biosynthesis; L-tryptophan biosynthesis; L-tryptophan from chorismate: step 5/5. Its function is as follows. The beta subunit is responsible for the synthesis of L-tryptophan from indole and L-serine. The sequence is that of Tryptophan synthase beta chain from Aliivibrio fischeri (strain MJ11) (Vibrio fischeri).